A 411-amino-acid polypeptide reads, in one-letter code: Citrate synthase (411 aa).

Active-site residues include His-304 and Asp-363.

This sequence belongs to the citrate synthase family.

The enzyme catalyses oxaloacetate + acetyl-CoA + H2O = citrate + CoA + H(+). It functions in the pathway carbohydrate metabolism; tricarboxylic acid cycle; isocitrate from oxaloacetate: step 1/2. This is Citrate synthase (gltA) from Rickettsia canadensis.